The sequence spans 461 residues: Photosystem II CP43 reaction center protein (461 aa).

The propeptide occupies 1 to 2 (ME). At threonine 3 the chain carries N-acetylthreonine. The residue at position 3 (threonine 3) is a Phosphothreonine. The next 5 membrane-spanning stretches (helical) occupy residues 57–81 (LFEV…PHIA), 122–143 (LIGP…KDKN), 166–188 (KAMY…RVIT), 243–263 (TPWP…LSYS), and 279–300 (WFNN…ASQS). Glutamate 355 is a binding site for [CaMn4O5] cluster. The chain crosses the membrane as a helical span at residues 435–459 (RARAAAAGFEKGIDRFDEPVLSMRP).

It belongs to the PsbB/PsbC family. PsbC subfamily. As to quaternary structure, PSII is composed of 1 copy each of membrane proteins PsbA, PsbB, PsbC, PsbD, PsbE, PsbF, PsbH, PsbI, PsbJ, PsbK, PsbL, PsbM, PsbT, PsbX, PsbY, PsbZ, Psb30/Ycf12, at least 3 peripheral proteins of the oxygen-evolving complex and a large number of cofactors. It forms dimeric complexes. Binds multiple chlorophylls and provides some of the ligands for the Ca-4Mn-5O cluster of the oxygen-evolving complex. It may also provide a ligand for a Cl- that is required for oxygen evolution. PSII binds additional chlorophylls, carotenoids and specific lipids. is required as a cofactor. In terms of processing, phosphorylated in vitro.

Its subcellular location is the plastid. It localises to the chloroplast thylakoid membrane. In terms of biological role, one of the components of the core complex of photosystem II (PSII). It binds chlorophyll and helps catalyze the primary light-induced photochemical processes of PSII. PSII is a light-driven water:plastoquinone oxidoreductase, using light energy to abstract electrons from H(2)O, generating O(2) and a proton gradient subsequently used for ATP formation. The chain is Photosystem II CP43 reaction center protein from Chlamydomonas reinhardtii (Chlamydomonas smithii).